We begin with the raw amino-acid sequence, 232 residues long: Orotate phosphoribosyltransferase (232 aa).

5-phospho-alpha-D-ribose 1-diphosphate is bound by residues arginine 107, lysine 108, lysine 111, and 133–141 (EDLTTDGGS). Residue threonine 137 coordinates orotate.

It belongs to the purine/pyrimidine phosphoribosyltransferase family. PyrE subfamily. In terms of assembly, homodimer. Mg(2+) serves as cofactor.

The enzyme catalyses orotidine 5'-phosphate + diphosphate = orotate + 5-phospho-alpha-D-ribose 1-diphosphate. The protein operates within pyrimidine metabolism; UMP biosynthesis via de novo pathway; UMP from orotate: step 1/2. Catalyzes the transfer of a ribosyl phosphate group from 5-phosphoribose 1-diphosphate to orotate, leading to the formation of orotidine monophosphate (OMP). The sequence is that of Orotate phosphoribosyltransferase from Cereibacter sphaeroides (strain KD131 / KCTC 12085) (Rhodobacter sphaeroides).